The primary structure comprises 650 residues: Putative lipase atg15 (650 aa).

Topologically, residues 1–11 (MKSSRKRTKRR) are cytoplasmic. A helical; Signal-anchor for type II membrane protein transmembrane segment spans residues 12–32 (VLQDMSISGLLLSVALLPSVV). Residues 33 to 650 (SAQDHVYLDP…CVGSTGTELR (618 aa)) are Lumenal-facing. N-linked (GlcNAc...) asparagine glycosylation is found at N165, N200, N222, N280, and N304. S320 acts as the Charge relay system in catalysis. N-linked (GlcNAc...) asparagine glycosylation occurs at N466.

The protein belongs to the AB hydrolase superfamily. Lipase family. As to quaternary structure, binds to both phosphatidylinositol (PI) and phosphatidylinositol 3,5-bisphosphate (PIP2).

Its subcellular location is the endosome. The protein localises to the multivesicular body membrane. It localises to the prevacuolar compartment membrane. The enzyme catalyses a triacylglycerol + H2O = a diacylglycerol + a fatty acid + H(+). Lipase which is essential for lysis of subvacuolar cytoplasm to vacuole targeted bodies and intravacuolar autophagic bodies. Involved in the lysis of intravacuolar multivesicular body (MVB) vesicles. The intravacuolar membrane disintegration by atg15 is critical to life span extension. This is Putative lipase atg15 (atg15) from Aspergillus fumigatus (strain ATCC MYA-4609 / CBS 101355 / FGSC A1100 / Af293) (Neosartorya fumigata).